The following is a 298-amino-acid chain: Ethanolamine ammonia-lyase small subunit (298 aa).

The interval 1-19 (MDQKQIEEIVRSVMASMGQ) is targets protein to the BMC. 3 residues coordinate adenosylcob(III)alamin: V210, E231, and C261.

This sequence belongs to the EutC family. The basic unit is a heterodimer which dimerizes to form tetramers. The heterotetramers trimerize; 6 large subunits form a core ring with 6 small subunits projecting outwards. Interacts with EutS, which targets it to the interior of the BMC. Adenosylcob(III)alamin is required as a cofactor.

The protein localises to the bacterial microcompartment. The catalysed reaction is ethanolamine = acetaldehyde + NH4(+). Its pathway is amine and polyamine degradation; ethanolamine degradation. In terms of biological role, catalyzes the deamination of various vicinal amino-alcohols to oxo compounds. It is spontaneously inactivated by its substrate and reactivated by EutA. May play a role in bacterial microcompartment (BMC) assembly or maintenance. Directly targeted to the BMC. Functionally, expression of the eut operon allows this bacteria to use ethanolamine (EA) as a carbon, nitrogen and energy source. It relies on cobalamin (vitamin B12) both as a cofactor for the ethanolamine ammonia-lyase activity and to induce the operon. EA enhances bacterial survival in macrophages in a concentration-dependent manner, suggesting it is an important nutrient during infection. This chain is Ethanolamine ammonia-lyase small subunit, found in Salmonella typhimurium (strain LT2 / SGSC1412 / ATCC 700720).